The sequence spans 274 residues: Diaminopimelate epimerase (274 aa).

Residues N11, Q44, and N64 each coordinate substrate. Catalysis depends on C73, which acts as the Proton donor. Residues 74–75 (GN), N157, N190, and 208–209 (ER) contribute to the substrate site. C217 acts as the Proton acceptor in catalysis. Residue 218–219 (GS) coordinates substrate.

It belongs to the diaminopimelate epimerase family. As to quaternary structure, homodimer (Potential). Previously DapF has been proposed to be a monomer, however it seems that it adopts a dimeric structure.

The protein resides in the cytoplasm. The enzyme catalyses (2S,6S)-2,6-diaminopimelate = meso-2,6-diaminopimelate. It functions in the pathway amino-acid biosynthesis; L-lysine biosynthesis via DAP pathway; DL-2,6-diaminopimelate from LL-2,6-diaminopimelate: step 1/1. Inhibited by LL-aziridino (LL-AziDAP), DL-aziridino (DL-AziDAP). Also inhibited by (2S,3R,6S)-2,6-diamino-3-fluoropimelate (L,L-3-fluoro-DAP) and (2R,3S,6S)-2,6-diamino-3-fluoropimelate (D,L-3-fluoro-DAP). Its function is as follows. Catalyzes the stereoinversion of LL-2,6-diaminopimelate (L,L-DAP) to meso-diaminopimelate (meso-DAP), a precursor of L-lysine and an essential component of the bacterial peptidoglycan. Only accepts DAP isomers with the L configuration. The chain is Diaminopimelate epimerase from Haemophilus influenzae (strain ATCC 51907 / DSM 11121 / KW20 / Rd).